The following is a 433-amino-acid chain: Serine--tRNA ligase (433 aa).

Position 235 to 237 (235 to 237) interacts with L-serine; sequence TSE. ATP is bound at residue 266–268; sequence RSE. Glutamate 289 lines the L-serine pocket. Residue 353–356 participates in ATP binding; it reads EISS. Serine 388 contributes to the L-serine binding site.

It belongs to the class-II aminoacyl-tRNA synthetase family. Type-1 seryl-tRNA synthetase subfamily. Homodimer. The tRNA molecule binds across the dimer.

It is found in the cytoplasm. It catalyses the reaction tRNA(Ser) + L-serine + ATP = L-seryl-tRNA(Ser) + AMP + diphosphate + H(+). It carries out the reaction tRNA(Sec) + L-serine + ATP = L-seryl-tRNA(Sec) + AMP + diphosphate + H(+). It functions in the pathway aminoacyl-tRNA biosynthesis; selenocysteinyl-tRNA(Sec) biosynthesis; L-seryl-tRNA(Sec) from L-serine and tRNA(Sec): step 1/1. In terms of biological role, catalyzes the attachment of serine to tRNA(Ser). Is also able to aminoacylate tRNA(Sec) with serine, to form the misacylated tRNA L-seryl-tRNA(Sec), which will be further converted into selenocysteinyl-tRNA(Sec). In Burkholderia lata (strain ATCC 17760 / DSM 23089 / LMG 22485 / NCIMB 9086 / R18194 / 383), this protein is Serine--tRNA ligase.